The chain runs to 149 residues: Large ribosomal subunit protein bL17 (149 aa).

This sequence belongs to the bacterial ribosomal protein bL17 family. In terms of assembly, part of the 50S ribosomal subunit. Contacts protein L32.

The polypeptide is Large ribosomal subunit protein bL17 (Kosmotoga olearia (strain ATCC BAA-1733 / DSM 21960 / TBF 19.5.1)).